A 189-amino-acid chain; its full sequence is Calcyphosin (189 aa).

EF-hand domains are found at residues 21–56 (SGIQ…LGLV), 57–92 (LDTA…PMSQ), 93–128 (AREA…RTHP), and 136–172 (TEEQ…VSAS). Residues Asp34, Asp36, Ser38, Ser40, Glu45, Asp70, Asp72, Ser74, Thr76, Glu81, Asp106, Ser108, Asp110, and Asp117 each contribute to the Ca(2+) site. Ser40 is modified (phosphoserine; by PKA).

In terms of assembly, monomer. Does not form oligomers in the presence of calcium.

Its subcellular location is the cytoplasm. Functionally, calcium-binding protein. May play a role in cellular signaling events (Potential). This Bos taurus (Bovine) protein is Calcyphosin (CAPS).